Here is an 848-residue protein sequence, read N- to C-terminus: MYLYIETLKQRLDAINQLRVDRALAAMGPAFQQVYSLLPTLLHYHHPLMPGYLDGNVPKGICLYTPDETQRHYLNELELYRGMSVQDPPKGELPITGVYTMGSTSSVGQSCSSDLDIWVCHQSWLDSEERQLLQRKCSLLESWAASLGVEVSFFLIDENRFRHNESGSLGGEDCGSTQHILLLDEFYRTAVRLAGKRILWNMVPCDEEEHYDDYVMTLYAQGVLTPNEWLDLGGLSSLSAEEYFGASLWQLYKSIDSPYKAVLKTLLLEAYSWEYPNPRLLAKDIKQRLHDGEIVSFGLDPYCMMLERVTEYLTAIEDFTRLDLVRRCFYLKVCEKLSRERACVGWRRAVLSQLVSEWGWDEARLAMLDNRANWKIDQVREAHNELLDAMMQSYRNLIRFARRNNLSVSASPQDIGVLTRKLYAAFEALPGKVTLVNPQISPDLSEPNLTFIYVPPGRANRSGWYLYNRAPNIESIISHQPLEYNRYLNKLVAWAWFNGLLTSRTRLYIKGNGIVDLPKLQEMVADVSHHFPLRLPAPTPKALYSPCEIRHLAIIVNLEYDPTAAFRNQVVHFDFRKLDVFSFGENQNCLVGSVDLLYRNSWNEVRTLHFNGEQSMIEALKTILGKMHQDAAPPDSVEVFCYSQHLRGLIRTRVQQLVSECIELRLSSTRQETGRFKALRVSGQTWGLFFERLNVSVQKLENAIEFYGAISHNKLHGLSVQVETNHVKLPAVVDGFASEGIIQFFFEETQDENGFNIYILDESNRVEVYHHCEGSKEELVRDVSRFYSSSHDRFTYGSSFINFNLPQFYQIVKVDGREQVIPFRTKSIGNMPPANQDHDTPLLQQYFS.

The interval 1–535 (MYLYIETLKQ…DVSHHFPLRL (535 aa)) is catalytic. A regulatory region spans residues 541 to 848 (KALYSPCEIR…DTPLLQQYFS (308 aa)). At His-609 the chain carries Phosphohistidine; by CRR.

It belongs to the adenylyl cyclase class-1 family.

Its subcellular location is the cytoplasm. It carries out the reaction ATP = 3',5'-cyclic AMP + diphosphate. This is Adenylate cyclase (cyaA) from Escherichia coli O157:H7.